The sequence spans 571 residues: Adenine deaminase (571 aa).

This sequence belongs to the metallo-dependent hydrolases superfamily. Adenine deaminase family. The cofactor is Mn(2+).

It catalyses the reaction adenine + H2O + H(+) = hypoxanthine + NH4(+). The sequence is that of Adenine deaminase from Dehalococcoides mccartyi (strain ATCC BAA-2266 / KCTC 15142 / 195) (Dehalococcoides ethenogenes (strain 195)).